The sequence spans 210 residues: Probable GTP-binding protein EngB (210 aa).

An EngB-type G domain is found at 25–199 (TGIEVAFAGR…RQKLDTWFNE (175 aa)). Residues 33-40 (GRSNAGKS), 60-64 (GRTQL), 78-81 (DLPG), 145-148 (TKAD), and 178-180 (FSS) contribute to the GTP site. Residues S40 and T62 each contribute to the Mg(2+) site.

Belongs to the TRAFAC class TrmE-Era-EngA-EngB-Septin-like GTPase superfamily. EngB GTPase family. The cofactor is Mg(2+).

In terms of biological role, necessary for normal cell division and for the maintenance of normal septation. This chain is Probable GTP-binding protein EngB, found in Escherichia coli O157:H7.